Reading from the N-terminus, the 319-residue chain is MDLLFLGTSAGVPTKARNVSATAVIEASGSHWYLVDCGEGTQHRLLHTPLSIRDLRAIFITHVHGDHCFGLPGLLASAGMSGRTQPLEVILPAVLHDWVRQGLVASDTFLPFELRLLPVEELIAWRSETLQVTTVQLSHRVPSVGFVFTEINPEPRLDIQRLDAEGITRGPLWGELAKGLTVTYDGQLLNGNDYLRPSRPPRRVIVCGDNDKPELLAAVARGADVLVHEATFTQAVVERTGGTFGHSTAAEVARFAEAAGVRNLVLTHFSARYQNDPRRSPHIDNVRDEALAHYSGQLTLAQDLQRYHLGRNGLLEASA.

Histidine 62, histidine 64, aspartate 66, histidine 67, histidine 139, aspartate 209, and histidine 268 together coordinate Zn(2+). Aspartate 66 acts as the Proton acceptor in catalysis.

The protein belongs to the RNase Z family. Homodimer. It depends on Zn(2+) as a cofactor.

The enzyme catalyses Endonucleolytic cleavage of RNA, removing extra 3' nucleotides from tRNA precursor, generating 3' termini of tRNAs. A 3'-hydroxy group is left at the tRNA terminus and a 5'-phosphoryl group is left at the trailer molecule.. Its function is as follows. Zinc phosphodiesterase, which displays some tRNA 3'-processing endonuclease activity. Probably involved in tRNA maturation, by removing a 3'-trailer from precursor tRNA. This is Ribonuclease Z from Pseudomonas putida (strain ATCC 47054 / DSM 6125 / CFBP 8728 / NCIMB 11950 / KT2440).